Reading from the N-terminus, the 92-residue chain is Small ribosomal subunit protein uS19 (92 aa).

This sequence belongs to the universal ribosomal protein uS19 family.

In terms of biological role, protein S19 forms a complex with S13 that binds strongly to the 16S ribosomal RNA. The polypeptide is Small ribosomal subunit protein uS19 (Buchnera aphidicola subsp. Baizongia pistaciae (strain Bp)).